The following is a 341-amino-acid chain: Holliday junction branch migration complex subunit RuvB (341 aa).

A large ATPase domain (RuvB-L) region spans residues M1 to Y182. Residues L21, R22, G63, K66, T67, T68, E129 to F131, R172, Y182, and R219 each bind ATP. Residue T67 participates in Mg(2+) binding. The interval T183–G253 is small ATPAse domain (RuvB-S). The interval Q256–G341 is head domain (RuvB-H). DNA contacts are provided by R292, R311, and R316.

This sequence belongs to the RuvB family. As to quaternary structure, homohexamer. Forms an RuvA(8)-RuvB(12)-Holliday junction (HJ) complex. HJ DNA is sandwiched between 2 RuvA tetramers; dsDNA enters through RuvA and exits via RuvB. An RuvB hexamer assembles on each DNA strand where it exits the tetramer. Each RuvB hexamer is contacted by two RuvA subunits (via domain III) on 2 adjacent RuvB subunits; this complex drives branch migration. In the full resolvosome a probable DNA-RuvA(4)-RuvB(12)-RuvC(2) complex forms which resolves the HJ.

It is found in the cytoplasm. It catalyses the reaction ATP + H2O = ADP + phosphate + H(+). Functionally, the RuvA-RuvB-RuvC complex processes Holliday junction (HJ) DNA during genetic recombination and DNA repair, while the RuvA-RuvB complex plays an important role in the rescue of blocked DNA replication forks via replication fork reversal (RFR). RuvA specifically binds to HJ cruciform DNA, conferring on it an open structure. The RuvB hexamer acts as an ATP-dependent pump, pulling dsDNA into and through the RuvAB complex. RuvB forms 2 homohexamers on either side of HJ DNA bound by 1 or 2 RuvA tetramers; 4 subunits per hexamer contact DNA at a time. Coordinated motions by a converter formed by DNA-disengaged RuvB subunits stimulates ATP hydrolysis and nucleotide exchange. Immobilization of the converter enables RuvB to convert the ATP-contained energy into a lever motion, pulling 2 nucleotides of DNA out of the RuvA tetramer per ATP hydrolyzed, thus driving DNA branch migration. The RuvB motors rotate together with the DNA substrate, which together with the progressing nucleotide cycle form the mechanistic basis for DNA recombination by continuous HJ branch migration. Branch migration allows RuvC to scan DNA until it finds its consensus sequence, where it cleaves and resolves cruciform DNA. The sequence is that of Holliday junction branch migration complex subunit RuvB from Ruegeria pomeroyi (strain ATCC 700808 / DSM 15171 / DSS-3) (Silicibacter pomeroyi).